Here is a 137-residue protein sequence, read N- to C-terminus: Oleosin Ara h 11.0102 (137 aa).

At A2 the chain carries N-acetylalanine; alternate. 2 consecutive transmembrane segments (helical) span residues 27 to 47 (AVVA…ATVI) and 55 to 75 (LFVI…LLGL).

The protein belongs to the oleosin family. As to expression, expressed in seeds (at protein level).

The protein resides in the lipid droplet. The protein localises to the membrane. In terms of biological role, may have a structural role to stabilize the lipid body during desiccation of the seed by preventing coalescence of the oil. Probably interacts with both lipid and phospholipid moieties of lipid bodies. May also provide recognition signals for specific lipase anchorage in lipolysis during seedling growth. The chain is Oleosin Ara h 11.0102 from Arachis hypogaea (Peanut).